Reading from the N-terminus, the 745-residue chain is Cysteine protease atg4 (745 aa).

3 stretches are compositionally biased toward low complexity: residues 29–42 (QQSY…APQQ), 52–64 (SPTS…SSST), and 194–215 (NNNS…NNNN). 2 disordered regions span residues 29 to 68 (QQSY…AMGN) and 192 to 215 (FQNN…NNNN). Catalysis depends on Cys-262, which acts as the Nucleophile. Disordered stretches follow at residues 344–363 (LNRG…KEEE) and 439–480 (QNNN…NGYN). The span at 439-477 (QNNNKNNNNNNPTTTTTTTTTATSSNNNNNQSPPSRVPN) shows a compositional bias: low complexity. Residues Asp-562 and His-564 contribute to the active site. Residues 686–745 (HIPYNPNNNQNNNQNNNNNNNKNNNNNTNQQQTPNYPPKLNTYQPDFSSDGEIDDFTMVG) are disordered. Residues 688 to 719 (PYNPNNNQNNNQNNNNNNNKNNNNNTNQQQTP) are compositionally biased toward low complexity. Residues 734 to 745 (SDGEIDDFTMVG) are compositionally biased toward acidic residues.

Belongs to the peptidase C54 family.

Its subcellular location is the cytoplasm. It carries out the reaction [protein]-C-terminal L-amino acid-glycyl-phosphatidylethanolamide + H2O = [protein]-C-terminal L-amino acid-glycine + a 1,2-diacyl-sn-glycero-3-phosphoethanolamine. Its function is as follows. Cysteine protease that plays a key role in autophagy by mediating both proteolytic activation and delipidation of ATG8 family proteins. The protease activity is required for proteolytic activation of ATG8 family proteins: cleaves the C-terminal amino acid of ATG8 proteins to reveal a C-terminal glycine. Exposure of the glycine at the C-terminus is essential for ATG8 proteins conjugation to phosphatidylethanolamine (PE) and insertion to membranes, which is necessary for autophagy. In addition to the protease activity, also mediates delipidation of PE-conjugated ATG8 proteins. The chain is Cysteine protease atg4 (atg4-1) from Dictyostelium discoideum (Social amoeba).